Here is a 251-residue protein sequence, read N- to C-terminus: Small ribosomal subunit protein uS2 (251 aa).

It belongs to the universal ribosomal protein uS2 family.

In Aromatoleum aromaticum (strain DSM 19018 / LMG 30748 / EbN1) (Azoarcus sp. (strain EbN1)), this protein is Small ribosomal subunit protein uS2.